Consider the following 235-residue polypeptide: MFDPFLEELQTGIQARGGISVEVPAGLEHNQSQKGSSTIQSWLWQVPGFRRWRVTRLDAGDSLQVLNSVAYPDFDLDHPLMGVDLLWFGARQKLVAVLDFQPLVQDKDYLDRHFDGLKDLNARFPDLNGEETMRSFDPNQYFSSWLLFCRGGSEEADRSLPKAFSAFLKAYWGLHDEASKEPSSISPGDVERLQNAYDVYSAERDPAHGLFTSHFGKEWSDRFLHEFLFPASQPA.

Belongs to the HY2 family.

The catalysed reaction is 15,16-dihydrobiliverdin + oxidized 2[4Fe-4S]-[ferredoxin] = biliverdin IXalpha + reduced 2[4Fe-4S]-[ferredoxin] + 2 H(+). In terms of biological role, catalyzes the two-electron reduction of biliverdin IX-alpha at the C15 methine bridge. The sequence is that of 15,16-dihydrobiliverdin:ferredoxin oxidoreductase (pebA) from Parasynechococcus marenigrum (strain WH8102).